Consider the following 114-residue polypeptide: Aspartate 1-decarboxylase (114 aa).

The active-site Schiff-base intermediate with substrate; via pyruvic acid is the Ser-25. Ser-25 carries the pyruvic acid (Ser) modification. Thr-57 serves as a coordination point for substrate. Residue Tyr-58 is the Proton donor of the active site. Substrate is bound at residue 73–75 (GAA).

The protein belongs to the PanD family. In terms of assembly, heterooctamer of four alpha and four beta subunits. The cofactor is pyruvate. In terms of processing, is synthesized initially as an inactive proenzyme, which is activated by self-cleavage at a specific serine bond to produce a beta-subunit with a hydroxyl group at its C-terminus and an alpha-subunit with a pyruvoyl group at its N-terminus.

It localises to the cytoplasm. The catalysed reaction is L-aspartate + H(+) = beta-alanine + CO2. Its pathway is cofactor biosynthesis; (R)-pantothenate biosynthesis; beta-alanine from L-aspartate: step 1/1. Its function is as follows. Catalyzes the pyruvoyl-dependent decarboxylation of aspartate to produce beta-alanine. The chain is Aspartate 1-decarboxylase from Thermotoga petrophila (strain ATCC BAA-488 / DSM 13995 / JCM 10881 / RKU-1).